The following is a 121-amino-acid chain: Large ribosomal subunit protein bL20 (121 aa).

This sequence belongs to the bacterial ribosomal protein bL20 family.

Binds directly to 23S ribosomal RNA and is necessary for the in vitro assembly process of the 50S ribosomal subunit. It is not involved in the protein synthesizing functions of that subunit. This chain is Large ribosomal subunit protein bL20, found in Ruegeria sp. (strain TM1040) (Silicibacter sp.).